A 330-amino-acid polypeptide reads, in one-letter code: Phenylalanine--tRNA ligase alpha subunit (330 aa).

Residue Glu257 participates in Mg(2+) binding.

It belongs to the class-II aminoacyl-tRNA synthetase family. Phe-tRNA synthetase alpha subunit type 1 subfamily. In terms of assembly, tetramer of two alpha and two beta subunits. It depends on Mg(2+) as a cofactor.

The protein resides in the cytoplasm. It catalyses the reaction tRNA(Phe) + L-phenylalanine + ATP = L-phenylalanyl-tRNA(Phe) + AMP + diphosphate + H(+). In Nostoc sp. (strain PCC 7120 / SAG 25.82 / UTEX 2576), this protein is Phenylalanine--tRNA ligase alpha subunit.